The following is a 129-amino-acid chain: Ig lambda-1 chain V regions MOPC 104E/RPC20/J558/S104 (129 aa).

A signal peptide spans 1–19 (MAWISLILSLLALSSGAIS). The residue at position 20 (Gln20) is a Pyrrolidone carboxylic acid. In terms of domain architecture, Ig-like spans 20-125 (QAVVTQESAL…HWVFGGGTKL (106 aa)).

This chain is Ig lambda-1 chain V regions MOPC 104E/RPC20/J558/S104, found in Mus musculus (Mouse).